The following is a 188-amino-acid chain: Probable manganese efflux pump MntP (188 aa).

Transmembrane regions (helical) follow at residues 3-23, 66-86, 106-128, 143-163, and 168-188; these read ITAT…ASIG, LEWN…RMII, WLLV…GLAF, ATLI…SIIG, and ILGG…HFHG.

The protein belongs to the MntP (TC 9.B.29) family.

The protein resides in the cell inner membrane. Probably functions as a manganese efflux pump. The sequence is that of Probable manganese efflux pump MntP from Escherichia coli O139:H28 (strain E24377A / ETEC).